The chain runs to 568 residues: Proline--tRNA ligase (568 aa).

The protein belongs to the class-II aminoacyl-tRNA synthetase family. ProS type 1 subfamily. As to quaternary structure, homodimer.

It is found in the cytoplasm. It catalyses the reaction tRNA(Pro) + L-proline + ATP = L-prolyl-tRNA(Pro) + AMP + diphosphate. In terms of biological role, catalyzes the attachment of proline to tRNA(Pro) in a two-step reaction: proline is first activated by ATP to form Pro-AMP and then transferred to the acceptor end of tRNA(Pro). As ProRS can inadvertently accommodate and process non-cognate amino acids such as alanine and cysteine, to avoid such errors it has two additional distinct editing activities against alanine. One activity is designated as 'pretransfer' editing and involves the tRNA(Pro)-independent hydrolysis of activated Ala-AMP. The other activity is designated 'posttransfer' editing and involves deacylation of mischarged Ala-tRNA(Pro). The misacylated Cys-tRNA(Pro) is not edited by ProRS. The sequence is that of Proline--tRNA ligase from Chromobacterium violaceum (strain ATCC 12472 / DSM 30191 / JCM 1249 / CCUG 213 / NBRC 12614 / NCIMB 9131 / NCTC 9757 / MK).